The chain runs to 95 residues: Small ribosomal subunit protein bS6 (95 aa).

The protein belongs to the bacterial ribosomal protein bS6 family.

Binds together with bS18 to 16S ribosomal RNA. This Desulfitobacterium hafniense (strain DSM 10664 / DCB-2) protein is Small ribosomal subunit protein bS6.